Here is a 64-residue protein sequence, read N- to C-terminus: Large ribosomal subunit protein bL28 (64 aa).

Belongs to the bacterial ribosomal protein bL28 family.

In Campylobacter jejuni subsp. jejuni serotype O:6 (strain 81116 / NCTC 11828), this protein is Large ribosomal subunit protein bL28.